The sequence spans 271 residues: Thiazole synthase (271 aa).

Residue Lys95 is the Schiff-base intermediate with DXP of the active site. Residues Gly156, 182–183, and 204–205 each bind 1-deoxy-D-xylulose 5-phosphate; these read AG and NT.

The protein belongs to the ThiG family. Homotetramer. Forms heterodimers with either ThiH or ThiS.

The protein localises to the cytoplasm. The enzyme catalyses [ThiS sulfur-carrier protein]-C-terminal-Gly-aminoethanethioate + 2-iminoacetate + 1-deoxy-D-xylulose 5-phosphate = [ThiS sulfur-carrier protein]-C-terminal Gly-Gly + 2-[(2R,5Z)-2-carboxy-4-methylthiazol-5(2H)-ylidene]ethyl phosphate + 2 H2O + H(+). Its pathway is cofactor biosynthesis; thiamine diphosphate biosynthesis. In terms of biological role, catalyzes the rearrangement of 1-deoxy-D-xylulose 5-phosphate (DXP) to produce the thiazole phosphate moiety of thiamine. Sulfur is provided by the thiocarboxylate moiety of the carrier protein ThiS. In vitro, sulfur can be provided by H(2)S. The polypeptide is Thiazole synthase (Shewanella amazonensis (strain ATCC BAA-1098 / SB2B)).